The following is a 258-amino-acid chain: Synapse differentiation-inducing gene protein 1 (258 aa).

At 1–181 (MDGIIEQKSM…NFLMMPPRDH (181 aa)) the chain is on the cytoplasmic side. S137 carries the post-translational modification Phosphoserine. A helical transmembrane segment spans residues 182–202 (LGLSVFSMLCCFWPLGIAAFY). Topologically, residues 203–228 (LSHETNKAVAKGDLHQASTSSRRALF) are extracellular. The segment at residues 229 to 249 (LAVLSITIGTGVYVGVAVALI) is an intramembrane region (helical). The Extracellular portion of the chain corresponds to 250–258 (AYLSKNNHL).

The protein belongs to the CD225/Dispanin family. In terms of assembly, homodimer. Interacts with GRIA1 and GRIA2.

It is found in the cell membrane. The protein resides in the early endosome membrane. It localises to the postsynaptic density membrane. Its subcellular location is the synapse. The protein localises to the cell projection. It is found in the dendrite. The protein resides in the dendritic spine. In terms of biological role, may regulate AMPA receptor content at nascent synapses, and have a role in postsynaptic development and maturation. This Macaca fascicularis (Crab-eating macaque) protein is Synapse differentiation-inducing gene protein 1 (SYNDIG1).